The following is a 421-amino-acid chain: U-box domain-containing protein 26 (421 aa).

The 75-residue stretch at 13 to 87 (QIPYHFRCPI…QEWCVANRSN (75 aa)) folds into the U-box domain.

The enzyme catalyses S-ubiquitinyl-[E2 ubiquitin-conjugating enzyme]-L-cysteine + [acceptor protein]-L-lysine = [E2 ubiquitin-conjugating enzyme]-L-cysteine + N(6)-ubiquitinyl-[acceptor protein]-L-lysine.. Its pathway is protein modification; protein ubiquitination. Functionally, functions as an E3 ubiquitin ligase. This is U-box domain-containing protein 26 (PUB26) from Arabidopsis thaliana (Mouse-ear cress).